Reading from the N-terminus, the 141-residue chain is NADPH-dependent 7-cyano-7-deazaguanine reductase (141 aa).

Cysteine 34 acts as the Thioimide intermediate in catalysis. The Proton donor role is filled by aspartate 41. Residues 56–58 and 75–76 each bind substrate; these read VEL and HE.

Belongs to the GTP cyclohydrolase I family. QueF type 1 subfamily.

Its subcellular location is the cytoplasm. The catalysed reaction is 7-aminomethyl-7-carbaguanine + 2 NADP(+) = 7-cyano-7-deazaguanine + 2 NADPH + 3 H(+). It participates in tRNA modification; tRNA-queuosine biosynthesis. In terms of biological role, catalyzes the NADPH-dependent reduction of 7-cyano-7-deazaguanine (preQ0) to 7-aminomethyl-7-deazaguanine (preQ1). This Acidithiobacillus ferrooxidans (strain ATCC 23270 / DSM 14882 / CIP 104768 / NCIMB 8455) (Ferrobacillus ferrooxidans (strain ATCC 23270)) protein is NADPH-dependent 7-cyano-7-deazaguanine reductase.